Reading from the N-terminus, the 858-residue chain is Protein VACUOLELESS1 (858 aa).

The protein belongs to the VPS16 family. As to quaternary structure, core component of at least two putative endosomal tethering complexes, the homotypic fusion and vacuole protein sorting (HOPS) complex and the class C core vacuole/endosome tethering (CORVET) complex. Their common core is composed of the class C Vps proteins VPS11, VCL1, VPS18 and VPS33, which in HOPS further associates with VPS39 and VPS41 and in CORVET with VPS3. In terms of tissue distribution, expressed in roots, leaves, stems, siliques, flowers and mature pollen.

The protein localises to the vacuole membrane. The protein resides in the prevacuolar compartment membrane. Functionally, required for vacuole biogenesis and vacuole enlargment in dividing and expanding cells. Involved in the docking or fusion of prevacuolar vesicles. Important for the function of both male and female gametophytes, but is not essential for the germination and development of pollen. This is Protein VACUOLELESS1 (VCL1) from Arabidopsis thaliana (Mouse-ear cress).